The following is an 807-amino-acid chain: Phenylalanine--tRNA ligase beta subunit (807 aa).

The 115-residue stretch at 39-153 (SARAQGVVVG…SLPPNGSPVA (115 aa)) folds into the tRNA-binding domain. One can recognise a B5 domain in the interval 407-491 (AEAGPVLLRR…RLVGFDRFGA (85 aa)). Mg(2+) contacts are provided by D469, D475, E478, and E479. The FDX-ACB domain occupies 713–806 (PTVPFSERDL…LSKQFQAELR (94 aa)).

The protein belongs to the phenylalanyl-tRNA synthetase beta subunit family. Type 1 subfamily. In terms of assembly, tetramer of two alpha and two beta subunits. The cofactor is Mg(2+).

The protein resides in the cytoplasm. It catalyses the reaction tRNA(Phe) + L-phenylalanine + ATP = L-phenylalanyl-tRNA(Phe) + AMP + diphosphate + H(+). The chain is Phenylalanine--tRNA ligase beta subunit from Synechococcus sp. (strain CC9605).